The primary structure comprises 413 residues: Serine hydroxymethyltransferase (413 aa).

(6S)-5,6,7,8-tetrahydrofolate contacts are provided by residues leucine 118 and 122–124 (GHL). An N6-(pyridoxal phosphate)lysine modification is found at lysine 228.

Belongs to the SHMT family. Homodimer. It depends on pyridoxal 5'-phosphate as a cofactor.

Its subcellular location is the cytoplasm. It catalyses the reaction (6R)-5,10-methylene-5,6,7,8-tetrahydrofolate + glycine + H2O = (6S)-5,6,7,8-tetrahydrofolate + L-serine. It participates in one-carbon metabolism; tetrahydrofolate interconversion. Its pathway is amino-acid biosynthesis; glycine biosynthesis; glycine from L-serine: step 1/1. Catalyzes the reversible interconversion of serine and glycine with tetrahydrofolate (THF) serving as the one-carbon carrier. This reaction serves as the major source of one-carbon groups required for the biosynthesis of purines, thymidylate, methionine, and other important biomolecules. Also exhibits THF-independent aldolase activity toward beta-hydroxyamino acids, producing glycine and aldehydes, via a retro-aldol mechanism. In Phytoplasma australiense, this protein is Serine hydroxymethyltransferase.